We begin with the raw amino-acid sequence, 310 residues long: uncharacterized protein (310 aa).

Residues 1–11 (MKVKSILKHSR) are compositionally biased toward basic residues. Disordered stretches follow at residues 1 to 227 (MKVK…SDHA) and 242 to 310 (AMEE…NENE). The segment covering 12–50 (MSSPSLETDSMESGQQQNMVSSTPSIDMNESDCSGTGTP) has biased composition (polar residues). The span at 51–80 (SEERIRRLRWDEENLSKAEQQKSAKMKITE) shows a compositional bias: basic and acidic residues. The span at 91 to 105 (PDDEVPEINLDETDS) shows a compositional bias: acidic residues. Residues 110–121 (TAGTLGDTLGTL) show a composition bias toward low complexity. Basic and acidic residues-rich tracts occupy residues 126 to 150 (VSKDSKDDNVSFSSDKKQFYVKKEP) and 182 to 195 (LPSKKELFPRETKP). Residues 242-253 (AMEEEALSEAEE) show a composition bias toward acidic residues. Basic and acidic residues predominate over residues 254-265 (NIPKKKPDFNEL). Ser-285 is modified (phosphoserine). Residues 297–310 (DSGSASDVNMNENE) show a composition bias toward polar residues.

This is an uncharacterized protein from Schizosaccharomyces pombe (strain 972 / ATCC 24843) (Fission yeast).